The primary structure comprises 103 residues: Large ribosomal subunit protein bL21 (103 aa).

Belongs to the bacterial ribosomal protein bL21 family. Part of the 50S ribosomal subunit. Contacts protein L20.

Its function is as follows. This protein binds to 23S rRNA in the presence of protein L20. This Mycobacterium marinum (strain ATCC BAA-535 / M) protein is Large ribosomal subunit protein bL21.